Here is a 419-residue protein sequence, read N- to C-terminus: Hyaluronan synthase (419 aa).

Helical transmembrane passes span 8 to 28 (LIVL…MYLF), 33 to 53 (VGIY…LSFL), 318 to 338 (IVAL…VAIG), 345 to 365 (AIQL…IVAL), and 376 to 396 (PASF…LQPL).

The protein belongs to the NodC/HAS family. The cofactor is Mg(2+).

It is found in the cell membrane. The catalysed reaction is [hyaluronan](n) + UDP-N-acetyl-alpha-D-glucosamine = N-acetyl-beta-D-glucosaminyl-(1-&gt;4)-[hyaluronan](n) + UDP + H(+). The enzyme catalyses N-acetyl-beta-D-glucosaminyl-(1-&gt;4)-[hyaluronan](n) + UDP-alpha-D-glucuronate = [hyaluronan](n+1) + UDP + H(+). It functions in the pathway glycan biosynthesis; hyaluronan biosynthesis. In terms of biological role, glycosaminoglycan synthesis. The hyaluronic acid capsule is involved in the pathogenicity of group A Streptococci; it may be the major virulence determinant. This is Hyaluronan synthase (hasA) from Streptococcus pyogenes serotype M18 (strain MGAS8232).